Reading from the N-terminus, the 648-residue chain is Biosynthetic arginine decarboxylase (648 aa).

Lysine 109 bears the N6-(pyridoxal phosphate)lysine mark. 291–301 is a substrate binding site; it reads IDVGGGLGIDF.

It belongs to the Orn/Lys/Arg decarboxylase class-II family. SpeA subfamily. Mg(2+) serves as cofactor. Requires pyridoxal 5'-phosphate as cofactor.

The enzyme catalyses L-arginine + H(+) = agmatine + CO2. It participates in amine and polyamine biosynthesis; agmatine biosynthesis; agmatine from L-arginine: step 1/1. Catalyzes the biosynthesis of agmatine from arginine. The sequence is that of Biosynthetic arginine decarboxylase from Prochlorococcus marinus (strain MIT 9312).